The chain runs to 102 residues: Small ribosomal subunit protein uS10 (102 aa).

This sequence belongs to the universal ribosomal protein uS10 family. As to quaternary structure, part of the 30S ribosomal subunit.

Involved in the binding of tRNA to the ribosomes. This is Small ribosomal subunit protein uS10 from Dehalococcoides mccartyi (strain ATCC BAA-2266 / KCTC 15142 / 195) (Dehalococcoides ethenogenes (strain 195)).